Reading from the N-terminus, the 173-residue chain is T cell receptor gamma constant 1 (173 aa).

One can recognise an Ig-like domain in the interval 10–104 (PKPTIFLPSI…NKNGVDQEII (95 aa)). Cys-32 and Cys-88 form a disulfide bridge. N-linked (GlcNAc...) asparagine glycans are attached at residues Asn-66, Asn-120, Asn-126, and Asn-135. A helical membrane pass occupies residues 139-161 (YYMYLLLLLKSVVYFAIITCCLL).

Gamma-delta TR is a heterodimer composed of a gamma and delta chain; disulfide-linked. The gamma-delta TR is associated with the transmembrane signaling CD3 coreceptor proteins following the stoichiometry: a single gamma-delta TR heterodimer associates with one CD3D-CD3E heterodimer, one CD3G-CD3E heterodimer and one CD247 homodimer forming a stable octameric structure. Upon activation, gamma-delta TR complex associates with FCER1G to initiate intracellular signaling.

The protein resides in the cell membrane. Functionally, constant region of T cell receptor (TR) gamma chain that participates in the antigen recognition. Gamma-delta TRs recognize a variety of self and foreign non-peptide antigens frequently expressed at the epithelial boundaries between the host and external environment, including endogenous lipids presented by MH-like protein CD1D and phosphoantigens presented by butyrophilin-like molecule BTN3A1. Upon antigen recognition induces rapid, innate-like immune responses involved in pathogen clearance and tissue repair. Binding of gamma-delta TR complex to antigen triggers phosphorylation of immunoreceptor tyrosine-based activation motifs (ITAMs) in the CD3 chains by the LCK and FYN kinases, allowing the recruitment, phosphorylation, and activation of ZAP70 that facilitates phosphorylation of the scaffolding proteins LCP2 and LAT. This lead to the formation of a supramolecular signalosome that recruits the phospholipase PLCG1, resulting in calcium mobilization and ERK activation, ultimately leading to T cell expansion and differentiation into effector cells. Gamma-delta TRs are produced through somatic rearrangement of a limited repertoire of variable (V), diversity (D), and joining (J) genes. The potential diversity of gamma-delta TRs is conferred by the unique ability to rearrange (D) genes in tandem and to utilize all three reading frames. The combinatorial diversity is considerably increased by the sequence exonuclease trimming and random nucleotide (N) region additions which occur during the V-(D)-J rearrangements. The chain is T cell receptor gamma constant 1 from Homo sapiens (Human).